A 129-amino-acid chain; its full sequence is Fluoride-specific ion channel FluC (129 aa).

Transmembrane regions (helical) follow at residues 8-28 (ILLV…VALW), 34-54 (AVFP…IGFI), 70-90 (IFLV…MIEH), and 102-122 (AALY…LGII). Na(+)-binding residues include G78 and T81.

The protein belongs to the fluoride channel Fluc/FEX (TC 1.A.43) family.

The protein resides in the cell inner membrane. It carries out the reaction fluoride(in) = fluoride(out). Its activity is regulated as follows. Na(+) is not transported, but it plays an essential structural role and its presence is essential for fluoride channel function. Fluoride-specific ion channel. Important for reducing fluoride concentration in the cell, thus reducing its toxicity. This is Fluoride-specific ion channel FluC from Chlorobium chlorochromatii (strain CaD3).